A 541-amino-acid chain; its full sequence is MNNQKNFLIVAIFLSVFLLWDKWGVTHVVGANGNLISQTKIKDASTINNSLTNKNLNASSIIHRNAELDLPNTITKNQAPFTTVVTDLLTLEISHKGGTIQNAWLNDYPIEINSEQKFQLLSNKADEIFQAQSGLLPQGQTPTHHSIFSSKNSHYQMDGNSLVVPFTWKSENGIKVIKRYHFNKNSYVIGIDYQITNTTNNTLNITSYTQLVRNALDQSNMIIPTYTGGARFDDQDVYEKIEFEDFNDQPKTTSKGGWIAMIEHYFFVAAIPDVNQIHTYSSKIINGEYLLTVVNPELVIAPGAIVTLPSSSLYIGPKEQKQINNVAPGLDKTVDYGVLFIIAKPLSELLNWIYSIIHSWGYSIITLTLLIKLAFYKLSEKSYRSMAGMRQLAPRLTKLKETYGDDKQKLGQKTMELYKKEKINPASGCLPILVQIPVFISLYWVLLEMVELRQAPFWYLTDLSAQDPYYILPLIMGVSMFAQQKLNPPPPDPMQAKIMMALPFVFTIFFLWFPSGLVLYWVVNNILSITQQWVINKRING.

6 consecutive transmembrane segments (helical) span residues 7–27, 289–309, 356–376, 430–450, 463–483, and 498–518; these read FLIV…GVTH, YLLT…VTLP, IIHS…LAFY, LPIL…LEMV, LSAQ…MFAQ, and IMMA…SGLV.

It belongs to the OXA1/ALB3/YidC family. Type 1 subfamily. In terms of assembly, interacts with the Sec translocase complex via SecD. Specifically interacts with transmembrane segments of nascent integral membrane proteins during membrane integration.

The protein resides in the cell inner membrane. Functionally, required for the insertion and/or proper folding and/or complex formation of integral membrane proteins into the membrane. Involved in integration of membrane proteins that insert both dependently and independently of the Sec translocase complex, as well as at least some lipoproteins. Aids folding of multispanning membrane proteins. The sequence is that of Membrane protein insertase YidC from Ruthia magnifica subsp. Calyptogena magnifica.